Here is a 262-residue protein sequence, read N- to C-terminus: 3-methyl-2-oxobutanoate hydroxymethyltransferase (262 aa).

Mg(2+) is bound by residues D42 and D81. 3-methyl-2-oxobutanoate-binding positions include 42 to 43, D81, and K110; that span reads DS. E112 serves as a coordination point for Mg(2+). Residue E180 is the Proton acceptor of the active site.

This sequence belongs to the PanB family. In terms of assembly, homodecamer; pentamer of dimers. Requires Mg(2+) as cofactor.

It localises to the cytoplasm. It catalyses the reaction 3-methyl-2-oxobutanoate + (6R)-5,10-methylene-5,6,7,8-tetrahydrofolate + H2O = 2-dehydropantoate + (6S)-5,6,7,8-tetrahydrofolate. It participates in cofactor biosynthesis; (R)-pantothenate biosynthesis; (R)-pantoate from 3-methyl-2-oxobutanoate: step 1/2. Functionally, catalyzes the reversible reaction in which hydroxymethyl group from 5,10-methylenetetrahydrofolate is transferred onto alpha-ketoisovalerate to form ketopantoate. This is 3-methyl-2-oxobutanoate hydroxymethyltransferase from Legionella pneumophila (strain Lens).